Reading from the N-terminus, the 128-residue chain is Small ribosomal subunit protein eS8 (128 aa).

The protein belongs to the eukaryotic ribosomal protein eS8 family. In terms of assembly, part of the 30S ribosomal subunit.

The sequence is that of Small ribosomal subunit protein eS8 from Methanococcus aeolicus (strain ATCC BAA-1280 / DSM 17508 / OCM 812 / Nankai-3).